Reading from the N-terminus, the 478-residue chain is Multidrug resistance outer membrane protein MdtQ (478 aa).

Residues 1-21 form the signal peptide; the sequence is MNRDSFYPAIACFPLLLMLAG. Cys22 carries N-palmitoyl cysteine lipidation. A lipid anchor (S-diacylglycerol cysteine) is attached at Cys22.

It belongs to the outer membrane factor (OMF) (TC 1.B.17) family.

The protein resides in the cell outer membrane. Its function is as follows. Could be involved in resistance to puromycin, acriflavine and tetraphenylarsonium chloride. This Escherichia coli O157:H7 protein is Multidrug resistance outer membrane protein MdtQ (mdtQ).